Here is a 279-residue protein sequence, read N- to C-terminus: Diaminopimelate epimerase (279 aa).

2 residues coordinate substrate: N14 and Q68. C77 functions as the Proton donor in the catalytic mechanism. Substrate-binding positions include G78–N79, N191, and E207–R208. C217 (proton acceptor) is an active-site residue. G218–T219 contacts substrate.

The protein belongs to the diaminopimelate epimerase family. Homodimer.

The protein resides in the cytoplasm. The enzyme catalyses (2S,6S)-2,6-diaminopimelate = meso-2,6-diaminopimelate. It functions in the pathway amino-acid biosynthesis; L-lysine biosynthesis via DAP pathway; DL-2,6-diaminopimelate from LL-2,6-diaminopimelate: step 1/1. Catalyzes the stereoinversion of LL-2,6-diaminopimelate (L,L-DAP) to meso-diaminopimelate (meso-DAP), a precursor of L-lysine. The protein is Diaminopimelate epimerase of Methanothrix thermoacetophila (strain DSM 6194 / JCM 14653 / NBRC 101360 / PT) (Methanosaeta thermophila).